A 179-amino-acid chain; its full sequence is MSRIGKLPIPVPNGVEVKIGTDVVEVKGPKGSLSTPVCSLLQYEQADGHVVLTRIEDDRVTRAQHGLRRSLLSNCIDGVTKGFSKALEVIGVGYRVAVKGNIIELQVGYSHPVLVELPEGLKATVEGQVLTISGIDKELVGEMAARIRRIRKPEPYKGKGIKYATETIRRKVGKSGGKK.

This sequence belongs to the universal ribosomal protein uL6 family. Part of the 50S ribosomal subunit.

Functionally, this protein binds to the 23S rRNA, and is important in its secondary structure. It is located near the subunit interface in the base of the L7/L12 stalk, and near the tRNA binding site of the peptidyltransferase center. The polypeptide is Large ribosomal subunit protein uL6 (Desulfovibrio desulfuricans (strain ATCC 27774 / DSM 6949 / MB)).